Here is a 705-residue protein sequence, read N- to C-terminus: SPbeta prophage-derived sublancin-168-processing and transport ATP-binding protein SunT (705 aa).

In terms of domain architecture, Peptidase C39 spans 12–138 (QFNSHDCGLA…SKFTNFILEI (127 aa)). C18 is an active-site residue. The next 6 helical transmembrane spans lie at 167–187 (IVFVILLTSLFVVGLAVAGSF), 205–225 (LITITLIFISMVLIRCIFDFV), 281–301 (ANFVTAIIDIILILGLGVILY), 306–326 (ILFLTIILPILLLSCLAILFF), 388–408 (VISNEILKGLIQNSFTIIILW), and 418–438 (SMSLGTLLFINTLAAFLLSSL). Residues 168–450 (VFVILLTSLF…ILSMQSDLQQ (283 aa)) form the ABC transmembrane type-1 domain. Residues 483–705 (IKTVNLNIGA…SYSENKEYSI (223 aa)) enclose the ABC transporter domain. ATP is bound at residue 516-523 (GESGTGKS).

This sequence belongs to the ABC transporter superfamily. SunT family. As to quaternary structure, homodimer.

The protein localises to the cell membrane. In terms of biological role, sunT (TC 3.A.1.112.4) is required for production of the lantibiotic sublancin-168, probably by both processing the signal peptide and exporting the resulting mature lantibiotic. This chain is SPbeta prophage-derived sublancin-168-processing and transport ATP-binding protein SunT (sunT), found in Bacillus subtilis (strain 168).